The sequence spans 297 residues: Ribosomal RNA small subunit methyltransferase H (297 aa).

Residues 30-32, D48, F75, D96, and Q103 contribute to the S-adenosyl-L-methionine site; that span reads GGY.

It belongs to the methyltransferase superfamily. RsmH family.

It is found in the cytoplasm. It carries out the reaction cytidine(1402) in 16S rRNA + S-adenosyl-L-methionine = N(4)-methylcytidine(1402) in 16S rRNA + S-adenosyl-L-homocysteine + H(+). Functionally, specifically methylates the N4 position of cytidine in position 1402 (C1402) of 16S rRNA. The polypeptide is Ribosomal RNA small subunit methyltransferase H (Ehrlichia chaffeensis (strain ATCC CRL-10679 / Arkansas)).